A 192-amino-acid polypeptide reads, in one-letter code: 21.7 kDa class VI heat shock protein (192 aa).

In terms of domain architecture, sHSP spans serine 80–phenylalanine 192.

It belongs to the small heat shock protein (HSP20) family. May form oligomeric structures.

Its subcellular location is the cytoplasm. This is 21.7 kDa class VI heat shock protein (HSP21.7) from Arabidopsis thaliana (Mouse-ear cress).